Consider the following 77-residue polypeptide: Sec-independent protein translocase protein TatA (77 aa).

A helical transmembrane segment spans residues 1–21; that stretch reads MGSFSIWHWLVVGILVLLLFG. Residues 41–77 are disordered; sequence KGMSEDDAPTPAPKQIDAQRAPDLSATPTPTAETENR. Residues 66 to 77 are compositionally biased toward polar residues; the sequence is ATPTPTAETENR.

Belongs to the TatA/E family. In terms of assembly, the Tat system comprises two distinct complexes: a TatABC complex, containing multiple copies of TatA, TatB and TatC subunits, and a separate TatA complex, containing only TatA subunits. Substrates initially bind to the TatABC complex, which probably triggers association of the separate TatA complex to form the active translocon.

The protein localises to the cell inner membrane. Functionally, part of the twin-arginine translocation (Tat) system that transports large folded proteins containing a characteristic twin-arginine motif in their signal peptide across membranes. TatA could form the protein-conducting channel of the Tat system. In Sphingopyxis alaskensis (strain DSM 13593 / LMG 18877 / RB2256) (Sphingomonas alaskensis), this protein is Sec-independent protein translocase protein TatA.